The chain runs to 597 residues: Elongation factor 4 (597 aa).

The tr-type G domain maps to 2-184 (KNIRNFSIIA…TIVAKVPAPE (183 aa)). GTP is bound by residues 14–19 (DHGKST) and 131–134 (NKID).

This sequence belongs to the TRAFAC class translation factor GTPase superfamily. Classic translation factor GTPase family. LepA subfamily.

Its subcellular location is the cell inner membrane. It carries out the reaction GTP + H2O = GDP + phosphate + H(+). Required for accurate and efficient protein synthesis under certain stress conditions. May act as a fidelity factor of the translation reaction, by catalyzing a one-codon backward translocation of tRNAs on improperly translocated ribosomes. Back-translocation proceeds from a post-translocation (POST) complex to a pre-translocation (PRE) complex, thus giving elongation factor G a second chance to translocate the tRNAs correctly. Binds to ribosomes in a GTP-dependent manner. The protein is Elongation factor 4 of Francisella tularensis subsp. mediasiatica (strain FSC147).